A 421-amino-acid polypeptide reads, in one-letter code: MDFLSITGGEKLQGSVSVSGAKNAALPLISATLLAKNEACLKNLPDVVDIKTLLSLLEMLGAKVQRIDPHTVKVNSSEILSTKATYDIVRKMRASILVLGPLLSRFGKCEVSLPGGCAIGARPVDLHLKAMEKMGAIVEIKGGYIVANAPKGLKGATIAFDKITVTGTENVVMAAALAKGVTKILNAAQEPEVVQLCEVLQAAGVEIKGIGSNELEIVGQEGEALEFKEVEVIPDRIEAGTYLCAGAMTNSSIRLERVVPEHLSAVTQKLEEIGFGIEYGENHLTLLPASKRRAFEIITTEYPGFPTDMQAQFMALATQCEGASIIEERLFENRFMHVSELQRLGAGIHLRGNTATVNGGTKLLCADVMATDLRASSALVLAALAAEGTTNIHRIYHLDRGYERLEEKLRALGAVIERGRE.

22–23 contacts phosphoenolpyruvate; it reads KN. Residue R93 participates in UDP-N-acetyl-alpha-D-glucosamine binding. C117 serves as the catalytic Proton donor. 2-(S-cysteinyl)pyruvic acid O-phosphothioketal is present on C117. Residues 122 to 126, D308, and L330 each bind UDP-N-acetyl-alpha-D-glucosamine; that span reads RPVDL.

Belongs to the EPSP synthase family. MurA subfamily.

The protein resides in the cytoplasm. It catalyses the reaction phosphoenolpyruvate + UDP-N-acetyl-alpha-D-glucosamine = UDP-N-acetyl-3-O-(1-carboxyvinyl)-alpha-D-glucosamine + phosphate. It participates in cell wall biogenesis; peptidoglycan biosynthesis. Functionally, cell wall formation. Adds enolpyruvyl to UDP-N-acetylglucosamine. This Wolinella succinogenes (strain ATCC 29543 / DSM 1740 / CCUG 13145 / JCM 31913 / LMG 7466 / NCTC 11488 / FDC 602W) (Vibrio succinogenes) protein is UDP-N-acetylglucosamine 1-carboxyvinyltransferase.